The following is a 159-amino-acid chain: Ribosomal RNA large subunit methyltransferase H (159 aa).

Residues L76, G107, and 126–131 contribute to the S-adenosyl-L-methionine site; that span reads LSKLTM.

This sequence belongs to the RNA methyltransferase RlmH family. Homodimer.

The protein resides in the cytoplasm. The catalysed reaction is pseudouridine(1915) in 23S rRNA + S-adenosyl-L-methionine = N(3)-methylpseudouridine(1915) in 23S rRNA + S-adenosyl-L-homocysteine + H(+). Its function is as follows. Specifically methylates the pseudouridine at position 1915 (m3Psi1915) in 23S rRNA. The protein is Ribosomal RNA large subunit methyltransferase H of Acinetobacter baumannii (strain AB307-0294).